The sequence spans 122 residues: Large ribosomal subunit protein uL14 (122 aa).

This sequence belongs to the universal ribosomal protein uL14 family. As to quaternary structure, part of the 50S ribosomal subunit. Forms a cluster with proteins L3 and L19. In the 70S ribosome, L14 and L19 interact and together make contacts with the 16S rRNA in bridges B5 and B8.

In terms of biological role, binds to 23S rRNA. Forms part of two intersubunit bridges in the 70S ribosome. This chain is Large ribosomal subunit protein uL14, found in Erythrobacter litoralis (strain HTCC2594).